We begin with the raw amino-acid sequence, 1413 residues long: DNA-directed RNA polymerase subunit beta' (1413 aa).

Zn(2+) contacts are provided by Cys-70, Cys-72, Cys-85, and Cys-88. Residues Asp-460, Asp-462, and Asp-464 each coordinate Mg(2+). Zn(2+)-binding residues include Cys-819, Cys-893, Cys-900, and Cys-903.

This sequence belongs to the RNA polymerase beta' chain family. In terms of assembly, the RNAP catalytic core consists of 2 alpha, 1 beta, 1 beta' and 1 omega subunit. When a sigma factor is associated with the core the holoenzyme is formed, which can initiate transcription. Mg(2+) is required as a cofactor. Requires Zn(2+) as cofactor.

The enzyme catalyses RNA(n) + a ribonucleoside 5'-triphosphate = RNA(n+1) + diphosphate. Its function is as follows. DNA-dependent RNA polymerase catalyzes the transcription of DNA into RNA using the four ribonucleoside triphosphates as substrates. This Burkholderia multivorans (strain ATCC 17616 / 249) protein is DNA-directed RNA polymerase subunit beta'.